The primary structure comprises 4499 residues: Dynein alpha chain, flagellar outer arm (4499 aa).

Residues M1–P1677 are stem. Kelch repeat units follow at residues R29–D84, R86–S135, V137–H183, K199–G245, K253–K304, and S307–L358. The Filamin repeat unit spans residues F425–C534. 2 Kelch repeats span residues E562–D608 and E610–A661. A disordered region spans residues P653–P720. Residues G655–A689 are compositionally biased toward low complexity. Acidic residues predominate over residues A690–A705. 2 Kelch repeats span residues L750 to N801 and K864 to G913. 2 coiled-coil regions span residues E1261–N1334 and K1382–F1450. AAA regions lie at residues Y1678–V1921 and D1981–S2225. Residues G1716 to T1723 and G2019 to T2026 contribute to the ATP site. A Kelch 11 repeat occupies M2269 to T2317. 2 AAA regions span residues D2331–G2577 and E2679–Y2928. G2369–T2376 serves as a coordination point for ATP. Positions L2655–D2688 form a coiled coil. G2717 to Q2724 provides a ligand contact to ATP. Positions V3003–K3023 form a coiled coil. The interval V3003 to L3262 is stalk. The stretch at L3070–F3117 is one Kelch 12 repeat. Coiled-coil stretches lie at residues D3170–L3262 and N3486–D3515. The segment at L3320–E3550 is AAA 5. The disordered stretch occupies residues G3614–E3687. The span at Q3630 to S3653 shows a compositional bias: basic and acidic residues. The tract at residues L3843–N4082 is AAA 6.

The protein belongs to the dynein heavy chain family. In terms of assembly, consists of at least 3 heavy chains (alpha, beta and gamma), 2 intermediate chains and 8 light chains.

The protein localises to the cell projection. Its subcellular location is the cilium. It is found in the flagellum. The protein resides in the cytoplasm. It localises to the cytoskeleton. The protein localises to the flagellum axoneme. Force generating protein of eukaryotic cilia and flagella. Produces force towards the minus ends of microtubules. Dynein has ATPase activity; the force-producing power stroke is thought to occur on release of ADP. This is Dynein alpha chain, flagellar outer arm (ODA11) from Chlamydomonas reinhardtii (Chlamydomonas smithii).